We begin with the raw amino-acid sequence, 240 residues long: Triosephosphate isomerase (240 aa).

8 to 10 (NWK) serves as a coordination point for substrate. The Electrophile role is filled by H93. The active-site Proton acceptor is the E160. A substrate-binding site is contributed by G166.

It belongs to the triosephosphate isomerase family. In terms of assembly, homodimer.

The protein resides in the cytoplasm. It catalyses the reaction D-glyceraldehyde 3-phosphate = dihydroxyacetone phosphate. Its pathway is carbohydrate biosynthesis; gluconeogenesis. The protein operates within carbohydrate degradation; glycolysis; D-glyceraldehyde 3-phosphate from glycerone phosphate: step 1/1. Functionally, involved in the gluconeogenesis. Catalyzes stereospecifically the conversion of dihydroxyacetone phosphate (DHAP) to D-glyceraldehyde-3-phosphate (G3P). This is Triosephosphate isomerase from Ehrlichia chaffeensis (strain ATCC CRL-10679 / Arkansas).